The chain runs to 356 residues: C-X-C chemokine receptor type 2 (356 aa).

Residues 1–46 (MEYINWDNYSLEDLFGDIDNYTYNTEMPIIPADSAPCRPESLDINK) are Extracellular-facing. N-linked (GlcNAc...) asparagine glycans are attached at residues asparagine 8 and asparagine 20. Residues 47–73 (YAVVVIYVLVFVLNLLGNSLVIMVVLY) form a helical membrane-spanning segment. Over 74-82 (SRVSHSVTD) the chain is Cytoplasmic. The helical transmembrane segment at 83–103 (VYLLNLAIADLLFALTLPIWA) threads the bilayer. The Extracellular segment spans residues 104–118 (VSKVKGWIFGTPLCK). Cysteine 117 and cysteine 194 are oxidised to a cystine. Residues 119-140 (IVSLLKEVNFYSGILLLASISM) form a helical membrane-spanning segment. At 141–161 (DRYLAIVHATRRLTQKKHWVK) the chain is on the cytoplasmic side. The chain crosses the membrane as a helical span at residues 162–181 (FICLGIWALSLILSLPIFVF). Residues 182–206 (RRAINPPYSSPVCYEDMGTNTTKLR) are Extracellular-facing. A helical membrane pass occupies residues 207 to 229 (IVMRALPQTFGFIVPLMIMLFCY). The Cytoplasmic segment spans residues 230 to 249 (GLTLRTLFEAHMGQKHRAMR). Residues 250-269 (VIFAVVLVFLLCWLPYNLVA) form a helical membrane-spanning segment. Residues 270–290 (DTLMRLQAIEETCQRRNDIGR) are Extracellular-facing. Residues 291 to 311 (ALDATEILGFFHSCLNPLIYA) traverse the membrane as a helical segment. Residues 312 to 356 (FIGQKFRHGLLKIMAFHGLISKEYLPKDSRPSFVGSSSANTSTTF) are Cytoplasmic-facing.

It belongs to the G-protein coupled receptor 1 family. As to quaternary structure, interacts with IL8. Interacts with GNAI2. Phosphorylated upon ligand binding; which is required for desensitization.

The protein localises to the cell membrane. Functionally, receptor for interleukin-8 which is a powerful neutrophil chemotactic factor. Binding of IL-8 to the receptor causes activation of neutrophils. This response is mediated via a G-protein that activates a phosphatidylinositol-calcium second messenger system. Binds to IL-8 with high affinity. Also binds with high affinity to CXCL3, GRO/MGSA and NAP-2. The protein is C-X-C chemokine receptor type 2 (CXCR2) of Canis lupus familiaris (Dog).